Here is a 144-residue protein sequence, read N- to C-terminus: Maximins 3/H11 type 2 (144 aa).

An N-terminal signal peptide occupies residues 1–18; the sequence is MHFKYIVAVSFLIASAYA. 2 consecutive propeptides follow at residues 19–43 and 73–122; these read RSVQ…REIR and RTAE…KKEK. An Isoleucine amide modification is found at I143.

The protein belongs to the bombinin family. In terms of tissue distribution, expressed by the skin glands.

The protein localises to the secreted. Functionally, maximin-3 shows antibacterial activity against both Gram-positive and Gram-negative bacteria. It also shows antimicrobial activity against the fungus C.albicans, but not against A.flavus nor P.uticale. It has little hemolytic activity. It possess a significant cytotoxicity against tumor cell lines. It possess a significant anti-HIV activity. It shows high spermicidal activity. Its function is as follows. Maximin-H11 shows antimicrobial activity against bacteria and against the fungus C.albicans. Shows strong hemolytic activity. The sequence is that of Maximins 3/H11 type 2 from Bombina maxima (Giant fire-bellied toad).